The sequence spans 173 residues: MNALQWSFRAQCLTGFLFCTGLLAYAIFLQLHQGLEPCPLCIFQRIAFAVLGILFLIAGLYNSSNVYTRKAYGLLIFLTAIIGTGIAGRHVWVQLMPHNTISSCGSPLSFLSETMGPFEVFRTVLTGTSNCGNIDWRFLGLSMPMWSMFWFVALALLGLLVGFKAERRKPLFS.

Topologically, residues 1–11 (MNALQWSFRAQ) are cytoplasmic. A helical membrane pass occupies residues 12–28 (CLTGFLFCTGLLAYAIF). At 29 to 46 (LQLHQGLEPCPLCIFQRI) the chain is on the periplasmic side. C38 and C41 are oxidised to a cystine. Residues 47–63 (AFAVLGILFLIAGLYNS) traverse the membrane as a helical segment. At 64 to 70 (SNVYTRK) the chain is on the cytoplasmic side. Residues 71–88 (AYGLLIFLTAIIGTGIAG) form a helical membrane-spanning segment. Residues 89 to 145 (RHVWVQLMPHNTISSCGSPLSFLSETMGPFEVFRTVLTGTSNCGNIDWRFLGLSMPM) lie on the Periplasmic side of the membrane. The cysteines at positions 104 and 131 are disulfide-linked. Residues 146–164 (WSMFWFVALALLGLLVGFK) traverse the membrane as a helical segment. Topologically, residues 165-173 (AERRKPLFS) are cytoplasmic.

It belongs to the DsbB family.

It is found in the cell inner membrane. Its function is as follows. Required for disulfide bond formation in some periplasmic proteins. Acts by oxidizing the DsbA protein. This chain is Disulfide bond formation protein B, found in Xylella fastidiosa (strain Temecula1 / ATCC 700964).